A 215-amino-acid chain; its full sequence is Superoxide dismutase [Mn] (215 aa).

Residues His27, His83, Asp170, and His174 each contribute to the Mn(2+) site.

The protein belongs to the iron/manganese superoxide dismutase family. As to quaternary structure, homodimer. Mn(2+) serves as cofactor.

It carries out the reaction 2 superoxide + 2 H(+) = H2O2 + O2. In terms of biological role, destroys superoxide anion radicals which are normally produced within the cells and which are toxic to biological systems. This Haemophilus influenzae (strain ATCC 51907 / DSM 11121 / KW20 / Rd) protein is Superoxide dismutase [Mn] (sodA).